The sequence spans 128 residues: Fluoride-specific ion channel FluC (128 aa).

4 helical membrane passes run 5-25 (IVAI…LSLA), 35-55 (LGTL…AVVF), 67-87 (LFVI…SVEV), and 96-116 (FGWA…LTAL). Residues G75 and T78 each contribute to the Na(+) site.

The protein belongs to the fluoride channel Fluc/FEX (TC 1.A.43) family.

The protein localises to the cell inner membrane. It catalyses the reaction fluoride(in) = fluoride(out). Na(+) is not transported, but it plays an essential structural role and its presence is essential for fluoride channel function. Fluoride-specific ion channel. Important for reducing fluoride concentration in the cell, thus reducing its toxicity. The polypeptide is Fluoride-specific ion channel FluC (Burkholderia cenocepacia (strain HI2424)).